Here is a 287-residue protein sequence, read N- to C-terminus: 4-hydroxybenzoate octaprenyltransferase (287 aa).

Transmembrane regions (helical) follow at residues 23–40 (IGSLLLLWPTLWALWLAG), 98–118 (ILFVVLVLLAFGLVLTLNKMT), 141–161 (LPQFVLGAAFGWSIPMAYAAV), 163–183 (ESLPATCWMMFLAYICWTVAY), 213–233 (IIIGLLQFSMLALLLALGNIT), and 235–255 (LGIPYTISLLVAAGMFIYQQI).

This sequence belongs to the UbiA prenyltransferase family. It depends on Mg(2+) as a cofactor.

It localises to the cell inner membrane. The catalysed reaction is all-trans-octaprenyl diphosphate + 4-hydroxybenzoate = 4-hydroxy-3-(all-trans-octaprenyl)benzoate + diphosphate. It functions in the pathway cofactor biosynthesis; ubiquinone biosynthesis. Functionally, catalyzes the prenylation of para-hydroxybenzoate (PHB) with an all-trans polyprenyl group. Mediates the second step in the final reaction sequence of ubiquinone-8 (UQ-8) biosynthesis, which is the condensation of the polyisoprenoid side chain with PHB, generating the first membrane-bound Q intermediate 3-octaprenyl-4-hydroxybenzoate. This Pectobacterium atrosepticum (strain SCRI 1043 / ATCC BAA-672) (Erwinia carotovora subsp. atroseptica) protein is 4-hydroxybenzoate octaprenyltransferase.